Consider the following 256-residue polypeptide: MSSVFGSVHILAMIAIQLLLTHSVSSLNLTNAYLHHKCSNTQGKYKQGSAFEKNLNLVLSTITSIGNFRDGFRYTEEGEDPNNVFVMFQCRGDSYWSKCPPCISTAVSGLRRRCPRNKGAIIWYDQCLLKISSVASFNKIDYENDFYLSNPNNMSDRGLFNKETSALLEKLAYKASDRNNLDGKQLVLYAAGEKRIGTKKVYAMVQCTKDLIFTKCFECLEGILRKFPQCCDGKRGGRVFGTSCNFRYELYPFLRN.

An N-terminal signal peptide occupies residues 1-26; the sequence is MSSVFGSVHILAMIAIQLLLTHSVSS. Gnk2-homologous domains follow at residues 33–136 and 142–253; these read YLHH…SVAS and YEND…LYPF.

Belongs to the cysteine-rich repeat secretory protein family.

The protein resides in the secreted. The sequence is that of Cysteine-rich repeat secretory protein 42 (CRRSP42) from Arabidopsis thaliana (Mouse-ear cress).